Reading from the N-terminus, the 298-residue chain is Probable GTP 3',8-cyclase (298 aa).

Residues 4–227 (RYGREIRSFR…MQNRKKYVID (224 aa)) form the Radical SAM core domain. Residue Arg13 coordinates GTP. Residues Cys20 and Cys24 each contribute to the [4Fe-4S] cluster site. Residue Tyr26 coordinates S-adenosyl-L-methionine. Cys27 is a [4Fe-4S] cluster binding site. Lys61 is a binding site for GTP. Gly65 is a binding site for S-adenosyl-L-methionine. Position 91 (Thr91) interacts with GTP. Ser115 contributes to the S-adenosyl-L-methionine binding site. Residue Lys152 participates in GTP binding. [4Fe-4S] cluster is bound by residues Cys243 and Cys246. 248–250 (RIR) provides a ligand contact to GTP. Cys260 contacts [4Fe-4S] cluster.

Belongs to the radical SAM superfamily. MoaA family. [4Fe-4S] cluster is required as a cofactor.

It carries out the reaction GTP + AH2 + S-adenosyl-L-methionine = (8S)-3',8-cyclo-7,8-dihydroguanosine 5'-triphosphate + 5'-deoxyadenosine + L-methionine + A + H(+). Its pathway is cofactor biosynthesis; molybdopterin biosynthesis. Functionally, catalyzes the cyclization of GTP to (8S)-3',8-cyclo-7,8-dihydroguanosine 5'-triphosphate. This chain is Probable GTP 3',8-cyclase, found in Methanococcus maripaludis (strain C6 / ATCC BAA-1332).